The primary structure comprises 576 residues: Tudor and KH domain-containing protein homolog (576 aa).

Residues 40 to 60 form a disordered region; it reads EEADSGGQRPASGIRGQTEEQ. 2 KH domains span residues 65-127 and 136-199; these read EVCL…RALL and VVKV…RKML. Over residues 209–224 the composition is skewed to basic and acidic residues; the sequence is LVRSMEEVEQRREPRR. The interval 209 to 253 is disordered; the sequence is LVRSMEEVEQRREPRRSPTNSIASSMYSSQTSLSSHTQPRDKLMA. Positions 232 to 243 are enriched in low complexity; it reads SSMYSSQTSLSS. Residues 310–375 enclose the Tudor domain; the sequence is APYVGQIVAA…CELRTDFLTL (66 aa). A disordered region spans residues 556–576; the sequence is ATDLENGNNNNASTTNGASAH. Low complexity predominate over residues 561–576; it reads NGNNNNASTTNGASAH.

This sequence belongs to the Tdrkh family. In terms of assembly, interacts (via C-terminus) with AGO3 (via the N-terminal region when symmetrically methylated on arginine residues); this interaction is RNA-independent and may be required for AGO3 localization to the nuage. Interacts (via Tudor domain) with piwi (via N-terminus). Interacts with tral and me31B. As to expression, ovaries (at protein level). Expressed in the ovary and testis.

It localises to the cytoplasm. It is found in the nucleus. Its subcellular location is the cytoplasmic ribonucleoprotein granule. In terms of biological role, involved in the piwi-interacting RNA (piRNA) metabolic process, which mediates the repression of transposable elements during meiosis by forming complexes composed of piRNAs and Piwi proteins, and governs the methylation and subsequent repression of transposons which is essential for germline integrity. Likely to act by recruiting Piwi proteins such as AGO3 and piwi to the piRNA biogenesis machinery in the nuage. Required for the final steps of primary piRNA biogenesis by participating in the 3' end-trimming of piwi-bound intermediates into mature piRNAs. This is Tudor and KH domain-containing protein homolog from Drosophila melanogaster (Fruit fly).